The chain runs to 664 residues: L-glutamate oxidase precursor (664 aa).

Residues 1 to 44 (MTEDHAVVRSDGGLSRRSFAAVAGTATVATALTSGVAAALPAPA) constitute a signal peptide (tat-type signal). FAD is bound by residues Ala105, Glu124, Ala125, Arg133, Met161, Arg162, Asp638, Trp646, and Ile647.

The protein belongs to the flavin monoamine oxidase family. LGOX subfamily. As to quaternary structure, the mature enzyme is a heterohexamer composed of 2 alpha chains, 2 beta chains and 2 gamma chains (alpha2beta2gamma2). The cofactor is FAD. Predicted to be exported by the Tat system. The position of the signal peptide cleavage has not been experimentally proven. Post-translationally, the precursor form is proteolytically cleaved by an endopeptidase into alpha, beta and gamma chains, which form the stable mature enzyme.

Its subcellular location is the secreted. The enzyme catalyses L-glutamate + O2 + H2O = H2O2 + 2-oxoglutarate + NH4(+). Activity is stimulated in the presence of Mn(2+), Ca(2+) or Mg(2+). Functionally, catalyzes the oxidative deamination of L-glutamate to 2-ketoglutarate along with the production of ammonia and hydrogen peroxide. This chain is L-glutamate oxidase precursor, found in Streptomyces viridosporus (strain ATCC 14672 / DSM 40746 / JCM 4963 / KCTC 9882 / NRRL B-12104 / FH 1290) (Streptomyces ghanaensis).